The following is an 84-amino-acid chain: Small ribosomal subunit protein bS18 (84 aa).

Belongs to the bacterial ribosomal protein bS18 family. Part of the 30S ribosomal subunit. Forms a tight heterodimer with protein bS6.

Functionally, binds as a heterodimer with protein bS6 to the central domain of the 16S rRNA, where it helps stabilize the platform of the 30S subunit. The protein is Small ribosomal subunit protein bS18 of Helicobacter hepaticus (strain ATCC 51449 / 3B1).